The chain runs to 466 residues: Soluble pyridine nucleotide transhydrogenase (466 aa).

36–45 (ERYHNVGGGC) contacts FAD.

Belongs to the class-I pyridine nucleotide-disulfide oxidoreductase family. The cofactor is FAD.

The protein localises to the cytoplasm. It catalyses the reaction NAD(+) + NADPH = NADH + NADP(+). Conversion of NADPH, generated by peripheral catabolic pathways, to NADH, which can enter the respiratory chain for energy generation. This Citrobacter koseri (strain ATCC BAA-895 / CDC 4225-83 / SGSC4696) protein is Soluble pyridine nucleotide transhydrogenase.